The primary structure comprises 394 residues: Ornithine aminotransferase 1 (394 aa).

K252 is modified (N6-(pyridoxal phosphate)lysine).

It belongs to the class-III pyridoxal-phosphate-dependent aminotransferase family. OAT subfamily. Requires pyridoxal 5'-phosphate as cofactor.

The protein resides in the cytoplasm. It carries out the reaction a 2-oxocarboxylate + L-ornithine = L-glutamate 5-semialdehyde + an L-alpha-amino acid. It functions in the pathway amino-acid biosynthesis; L-proline biosynthesis; L-glutamate 5-semialdehyde from L-ornithine: step 1/1. Catalyzes the interconversion of ornithine to glutamate semialdehyde. The sequence is that of Ornithine aminotransferase 1 from Staphylococcus aureus (strain COL).